Consider the following 271-residue polypeptide: Neurexophilin-1 (271 aa).

The first 21 residues, 1 to 21 (MQAACWYVLFLLQPTVYLVTC), serve as a signal peptide directing secretion. The segment at 22 to 97 (ANLTNGGKSE…WDWLRNSTDL (76 aa)) is II. N-linked (GlcNAc...) asparagine glycans are attached at residues Asn-23, Asn-68, Asn-93, Asn-146, Asn-156, and Asn-162. An III region spans residues 98–176 (QEPRPRAKRR…LVPPTKIVEF (79 aa)). Positions 177–185 (DLAQQTVID) are IV (linker domain). Residues 186 to 271 (AKDSKSFNCR…HSDTPYFPSG (86 aa)) form a v (Cys-rich) region.

The protein belongs to the neurexophilin family.

Its subcellular location is the secreted. In terms of biological role, may be signaling molecules that resemble neuropeptides and that act by binding to alpha-neurexins and possibly other receptors. The polypeptide is Neurexophilin-1 (NXPH1) (Homo sapiens (Human)).